A 721-amino-acid chain; its full sequence is Ophiobolin F synthase oblA (721 aa).

Positions 5–325 (YDQPYSVLLD…RYNLKAEWNE (321 aa)) are (7Z)-ophiobola-7,19-dien-3-ol synthase. Mg(2+) contacts are provided by aspartate 97 and aspartate 101. Aspartate 97 lines the substrate pocket. The short motif at 97 to 101 (DDVID) is the DDXXD 1 element. Substrate is bound by residues 185–188 (RSLD), asparagine 229, 233–237 (SFEKE), and 316–317 (RY). Positions 229-237 (NDLFSFEKE) match the NSE/DTE motif. Residues 326–721 (LQMLRAKHGV…LRLMMEMLKV (396 aa)) form a geranylfarnesyl diphosphate synthase region. Positions 348–387 (SMDHIWKKGSTQGESKGEKRKRQSVNGTNGVNGTNGVKKP) are disordered. Positions 372–384 (VNGTNGVNGTNGV) are enriched in low complexity. Residues lysine 432, arginine 435, and histidine 464 each coordinate isopentenyl diphosphate. Aspartate 471 and aspartate 475 together coordinate Mg(2+). The DDXXD 2 signature appears at 471 to 475 (DDLED). Arginine 480 contributes to the dimethylallyl diphosphate binding site. Arginine 481 contributes to the isopentenyl diphosphate binding site. The dimethylallyl diphosphate site is built by lysine 558, threonine 559, glutamine 597, asparagine 604, lysine 614, and lysine 624.

It in the N-terminal section; belongs to the terpene synthase family. The protein in the C-terminal section; belongs to the FPP/GGPP synthase family. Mg(2+) is required as a cofactor.

The catalysed reaction is isopentenyl diphosphate + (2E,6E)-farnesyl diphosphate = (2E,6E,10E)-geranylgeranyl diphosphate + diphosphate. It carries out the reaction isopentenyl diphosphate + (2E,6E,10E)-geranylgeranyl diphosphate = (2E,6E,10E,14E)-geranylfarnesyl diphosphate + diphosphate. The enzyme catalyses (2E,6E,10E,14E)-geranylfarnesyl diphosphate + H2O = ophiobolin F + diphosphate. The protein operates within secondary metabolite biosynthesis; terpenoid biosynthesis. Its function is as follows. Bifunctional sesterterpene synthase; part of the gene cluster that mediates the biosynthesis of the sesterterpenes ophiobolins, fungal phytotoxins with potential anti-cancer activities. The first step of the pathway is performed by the sesterterpene synthase oblA that possesses both prenyl transferase and terpene cyclase activity, converting isopentenyl diphosphate and dimethylallyl diphosphate into geranylfarnesyl diphosphate (GFPP) and further converting GFPP into ophiobolin F, respectively. Other sesterterpenoids (C(25) terpenoids) are found as minor products of oblA. The cytochrome P450 monooxygenase oblB then catalyzes a four-step oxidative transformation of ophiobolin F to yield ophiobolin C. The FAD-dependent oxidoreductase oblC might be involved in a later oxidation step that produces ophiobolin A. In Cochliobolus heterostrophus (strain C5 / ATCC 48332 / race O) (Southern corn leaf blight fungus), this protein is Ophiobolin F synthase oblA.